The sequence spans 167 residues: MRVEVGQIVNTHGIKGEIKVKSNSDFTDVRFQPGQVLTVVHNNNDLEYTVKSHRVHKGLHMLTFEGINNINDIEHLKGSSIYQERDHEDIVLEENEFYYSDIIGCTVFDDQETPIGRVINIFETGANDVWVIKGSKEYLIPYIADVVKEVDVENKKIIITPMEGLLD.

Positions Glu-94–Leu-165 constitute a PRC barrel domain.

Belongs to the RimM family. As to quaternary structure, binds ribosomal protein uS19.

Its subcellular location is the cytoplasm. Its function is as follows. An accessory protein needed during the final step in the assembly of 30S ribosomal subunit, possibly for assembly of the head region. Essential for efficient processing of 16S rRNA. May be needed both before and after RbfA during the maturation of 16S rRNA. It has affinity for free ribosomal 30S subunits but not for 70S ribosomes. The protein is Ribosome maturation factor RimM of Staphylococcus aureus (strain Mu3 / ATCC 700698).